The chain runs to 128 residues: Fluoride-specific ion channel FluC (128 aa).

4 consecutive transmembrane segments (helical) span residues 4 to 24, 37 to 57, 63 to 83, and 99 to 119; these read LILAIIVGCGGFIGAALRYLI, PYGTLIVNIVGAIIIGFIMDI, LISGHTKLFLTTGMMGGLTTF, and ILMGCTNAALNLGLSLVGVII. 2 residues coordinate Na(+): G78 and T81.

The protein belongs to the fluoride channel Fluc/FEX (TC 1.A.43) family.

The protein resides in the cell membrane. The enzyme catalyses fluoride(in) = fluoride(out). With respect to regulation, na(+) is not transported, but it plays an essential structural role and its presence is essential for fluoride channel function. Its function is as follows. Fluoride-specific ion channel. Important for reducing fluoride concentration in the cell, thus reducing its toxicity. This is Fluoride-specific ion channel FluC from Clostridium novyi (strain NT).